We begin with the raw amino-acid sequence, 262 residues long: Ribosomal RNA small subunit methyltransferase A (262 aa).

Residues histidine 13, leucine 15, glycine 40, glutamate 61, aspartate 85, and asparagine 103 each coordinate S-adenosyl-L-methionine.

It belongs to the class I-like SAM-binding methyltransferase superfamily. rRNA adenine N(6)-methyltransferase family. RsmA subfamily.

The protein localises to the cytoplasm. It carries out the reaction adenosine(1518)/adenosine(1519) in 16S rRNA + 4 S-adenosyl-L-methionine = N(6)-dimethyladenosine(1518)/N(6)-dimethyladenosine(1519) in 16S rRNA + 4 S-adenosyl-L-homocysteine + 4 H(+). Its function is as follows. Specifically dimethylates two adjacent adenosines (A1518 and A1519) in the loop of a conserved hairpin near the 3'-end of 16S rRNA in the 30S particle. May play a critical role in biogenesis of 30S subunits. This is Ribosomal RNA small subunit methyltransferase A from Bordetella petrii (strain ATCC BAA-461 / DSM 12804 / CCUG 43448).